The chain runs to 434 residues: Serine--tRNA ligase (434 aa).

L-serine is bound at residue 239-241 (TAE). 270–272 (RSE) contributes to the ATP binding site. Glutamate 293 is an L-serine binding site. 357–360 (EISS) provides a ligand contact to ATP. Serine 393 contributes to the L-serine binding site.

This sequence belongs to the class-II aminoacyl-tRNA synthetase family. Type-1 seryl-tRNA synthetase subfamily. In terms of assembly, homodimer. The tRNA molecule binds across the dimer.

It localises to the cytoplasm. The catalysed reaction is tRNA(Ser) + L-serine + ATP = L-seryl-tRNA(Ser) + AMP + diphosphate + H(+). The enzyme catalyses tRNA(Sec) + L-serine + ATP = L-seryl-tRNA(Sec) + AMP + diphosphate + H(+). Its pathway is aminoacyl-tRNA biosynthesis; selenocysteinyl-tRNA(Sec) biosynthesis; L-seryl-tRNA(Sec) from L-serine and tRNA(Sec): step 1/1. Functionally, catalyzes the attachment of serine to tRNA(Ser). Is also able to aminoacylate tRNA(Sec) with serine, to form the misacylated tRNA L-seryl-tRNA(Sec), which will be further converted into selenocysteinyl-tRNA(Sec). This chain is Serine--tRNA ligase, found in Mesorhizobium japonicum (strain LMG 29417 / CECT 9101 / MAFF 303099) (Mesorhizobium loti (strain MAFF 303099)).